The sequence spans 472 residues: Ribosomal protein uS12 methylthiotransferase RimO (472 aa).

Residues 33–143 form the MTTase N-terminal domain; that stretch reads NRIGFVSLGC…VLKHVHKYVP (111 aa). Residues Cys42, Cys78, Cys107, Cys175, Cys179, and Cys182 each contribute to the [4Fe-4S] cluster site. A Radical SAM core domain is found at 161 to 398; it reads LTPKHYAYLK…MEVQAEISAE (238 aa). The 67-residue stretch at 401–467 folds into the TRAM domain; that stretch reads ARFVGRTLDI…EHDLWAEVVD (67 aa).

Belongs to the methylthiotransferase family. RimO subfamily. [4Fe-4S] cluster is required as a cofactor.

It is found in the cytoplasm. It carries out the reaction L-aspartate(89)-[ribosomal protein uS12]-hydrogen + (sulfur carrier)-SH + AH2 + 2 S-adenosyl-L-methionine = 3-methylsulfanyl-L-aspartate(89)-[ribosomal protein uS12]-hydrogen + (sulfur carrier)-H + 5'-deoxyadenosine + L-methionine + A + S-adenosyl-L-homocysteine + 2 H(+). In terms of biological role, catalyzes the methylthiolation of an aspartic acid residue of ribosomal protein uS12. The chain is Ribosomal protein uS12 methylthiotransferase RimO from Shewanella baltica (strain OS195).